Consider the following 533-residue polypeptide: Tyrosine decarboxylase (533 aa).

The disordered stretch occupies residues 1 to 22 (MAPPSHCHTINGGAPRNGAIPE). Thr-281 and Asn-336 together coordinate pyridoxal 5'-phosphate. N6-(pyridoxal phosphate)lysine is present on Lys-339.

Belongs to the group II decarboxylase family. The cofactor is pyridoxal 5'-phosphate.

The enzyme catalyses L-tyrosine + H(+) = tyramine + CO2. In terms of biological role, catalyzes the decarboxylation of L-tyrosine to tyramine, which can be converted to the hydroxycinnamic acid amides feruloyltyramine and 4-coumaroyltyramine. Possesses low tryptophan decarboxylase activity. The sequence is that of Tyrosine decarboxylase from Oryza sativa subsp. japonica (Rice).